We begin with the raw amino-acid sequence, 374 residues long: MDVIEATEGTTTFLVPVQDSTGQFPPGTAPVFFNRRMELNRDATVLLLSVLQPSDYLDAMGATGVRGLRVAHEVGIPVTINDRDPEAIPLIRENVARLGLPVTVTCRDACSLLFEQAFDAVDIDPFGTPAPFTDAGIRGTRRFLLLTATDTAPLCGAHLKAGIRRYFARPGNTGYHGEVGLRILLGFVARETVKYDRGIEPLFCFAREHFVRLNLRLTRGPKAADRTIERLGFILQCPTCAYREELPGMFPPAATCPFCGKPLRPIGPLFLGAISSDEILGQMQARLPSCGLGTQKELEKLLTTCREELPTSSHYDYHRVAQQLVVSPPKIETLLEALRSAGFDASRTHYSGTGVKTNAPLPVLYDAIRGKNEP.

A Trm1 methyltransferase domain is found at Ile4–Ile368. 5 residues coordinate S-adenosyl-L-methionine: Arg41, Arg66, Asp82, Asp108, and Ala109. Cys237, Cys240, Cys256, and Cys259 together coordinate Zn(2+).

Belongs to the class I-like SAM-binding methyltransferase superfamily. Trm1 family.

It carries out the reaction guanosine(26) in tRNA + 2 S-adenosyl-L-methionine = N(2)-dimethylguanosine(26) in tRNA + 2 S-adenosyl-L-homocysteine + 2 H(+). Its function is as follows. Dimethylates a single guanine residue at position 26 of a number of tRNAs using S-adenosyl-L-methionine as donor of the methyl groups. The polypeptide is tRNA (guanine(26)-N(2))-dimethyltransferase (Methanoregula boonei (strain DSM 21154 / JCM 14090 / 6A8)).